A 545-amino-acid polypeptide reads, in one-letter code: Autoimmune regulator (545 aa).

Residues 1–105 form the HSR domain; it reads MATDAALRRL…ILDSFPKDVD (105 aa). 2 consecutive short sequence motifs (LXXLL motif) follow at residues 7 to 11 and 63 to 67; these read LRRLL and LSWLL. Disordered stretches follow at residues 101–178 and 234–290; these read PKDV…LPLG and SKFE…SDPQ. Residues 116–128 show a composition bias toward pro residues; that stretch reads PAVPKALVPPPRL. Residues 140-152 are compositionally biased toward low complexity; it reads AAAPAALTPRGTA. The 100-residue stretch at 181-280 folds into the SAND domain; the sequence is IQTMSASVQR…ARLGQQGSVP (100 aa). Interaction with histone H3 not methylated at 'Lys-4' regions lie at residues 295 to 298, 304 to 312, and 331 to 335; these read NEDE, DGGELICCD, and PSGTW. The PHD-type 1 zinc finger occupies 296 to 343; it reads EDECAVCRDGGELICCDGCPRAFHLACLSPPLREIPSGTWRCSSCLQA. A disordered region spans residues 348-382; the sequence is VQPRAEEPRPQEPPVETPLPPGLRSAGEEVRGPPG. Positions 358–368 are enriched in pro residues; it reads QEPPVETPLPP. An LXXLL motif 3 motif is present at residues 414 to 418; sequence LHPLL. The segment at 434 to 475 adopts a PHD-type 2 zinc-finger fold; sequence CGVCGDGTDVLRCTHCAAAFHWRCHFPAGTSRPGTGLRCRSC. The segment at 489–508 is disordered; that stretch reads APSPARLAPGPAKDDTASHE. Positions 516–520 match the LXXLL motif 4 motif; that stretch reads LESLL.

In terms of assembly, homodimer and homotetramer. Interacts with CREBBP. Interacts preferentially with histone H3 that is not methylated at 'Lys-4'. Binds with lower affinity to histone H3 that is monomethylated at 'Lys-4'. Trimethylation of histone H3 at 'Lys-4' or phosphorylation at 'Thr-3' abolish the interaction. Binds with lower affinity to histone H3 that is acetylated at 'Lys-4', or that is acetylated at 'Lys-9' or trimethylated at 'Lys-9'. Binds histone H3 that is dimethylated at 'Arg-2' with very low affinity. In terms of processing, phosphorylated. Phosphorylation could trigger oligomerization. As to expression, widely expressed. Expressed at higher level in thymus (medullary epithelial cells and monocyte-dendritic cells), pancreas, adrenal cortex and testis. Expressed at lower level in the spleen, fetal liver and lymph nodes. In secondary lymphoid organs, expressed in a discrete population of bone marrow-derived toleregenic antigen presenting cells (APCs) called extrathymic AIRE expressing cells (eTAC)(at protein level). Isoform 2 and isoform 3 seem to be less frequently expressed than isoform 1, if at all.

It is found in the nucleus. The protein resides in the cytoplasm. Transcription factor playing an essential role to promote self-tolerance in the thymus by regulating the expression of a wide array of self-antigens that have the commonality of being tissue-restricted in their expression pattern in the periphery, called tissue restricted antigens (TRA). Binds to G-doublets in an A/T-rich environment; the preferred motif is a tandem repeat of 5'-ATTGGTTA-3' combined with a 5'-TTATTA-3' box. Binds to nucleosomes. Binds to chromatin and interacts selectively with histone H3 that is not methylated at 'Lys-4', not phosphorylated at 'Thr-3' and not methylated at 'Arg-2'. Functions as a sensor of histone H3 modifications that are important for the epigenetic regulation of gene expression. Mainly expressed by medullary thymic epithelial cells (mTECs), induces the expression of thousands of tissue-restricted proteins, which are presented on major histocompatibility complex class I (MHC-I) and MHC-II molecules to developing T-cells percolating through the thymic medulla. Also induces self-tolerance through other mechanisms such as the regulation of the mTEC differentiation program. Controls the medullary accumulation of thymic dendritic cells and the development of regulatory T-cell through the regulation of XCL1 expression. Regulates the production of CCR4 and CCR7 ligands in medullary thymic epithelial cells and alters the coordinated maturation and migration of thymocytes. In thimic B-cells, allows the presentation of licensing-dependent endogenous self-anitgen for negative selection. In secondary lymphoid organs, induces functional inactivation of CD4(+) T-cells. Expressed by a distinct bone marrow-derived population, induces self-tolerance through a mechanism that does not require regulatory T-cells and is resitant to innate inflammatory stimuli. The protein is Autoimmune regulator (AIRE) of Homo sapiens (Human).